A 535-amino-acid polypeptide reads, in one-letter code: Alpha-1,3-mannosyl-glycoprotein 4-beta-N-acetylglucosaminyltransferase A (535 aa).

Residues 1–6 (MRLRNG) lie on the Cytoplasmic side of the membrane. Residues 7-27 (TVATALVFVTSFLTLSWYTTW) form a helical; Signal-anchor for type II membrane protein membrane-spanning segment. Residues 28–63 (QNGKEKLIAYQREFLALKERLRVAEHRISQRSSELN) adopt a coiled-coil conformation. The Lumenal segment spans residues 28–535 (QNGKEKLIAY…NEIHIKKVTS (508 aa)). N-linked (GlcNAc...) asparagine glycosylation is found at N77 and N458. Phosphoserine is present on S474.

This sequence belongs to the glycosyltransferase 54 family. The cofactor is a divalent metal cation. In terms of processing, N-glycosylated.

The protein resides in the golgi apparatus membrane. It localises to the secreted. It catalyses the reaction N(4)-{beta-D-GlcNAc-(1-&gt;2)-alpha-D-Man-(1-&gt;3)-[beta-D-GlcNAc-(1-&gt;2)-alpha-D-Man-(1-&gt;6)]-beta-D-Man-(1-&gt;4)-beta-D-GlcNAc-(1-&gt;4)-beta-D-GlcNAc}-L-asparaginyl-[protein] + UDP-N-acetyl-alpha-D-glucosamine = N(4)-{beta-D-GlcNAc-(1-&gt;2)-[beta-D-GlcNAc-(1-&gt;4)]-alpha-D-Man-(1-&gt;3)-[beta-D-GlcNAc-(1-&gt;2)-alpha-D-Man-(1-&gt;6)]-beta-D-Man-(1-&gt;4)-beta-D-GlcNAc-(1-&gt;4)-beta-D-GlcNAc}-L-asparaginyl-[protein] + UDP + H(+). It carries out the reaction an N(4)-{beta-D-GlcNAc-(1-&gt;2)-alpha-D-Man-(1-&gt;3)-[alpha-D-Man-(1-&gt;6)]-beta-D-Man-(1-&gt;4)-beta-D-GlcNAc-(1-&gt;4)-beta-D-GlcNAc}-L-asparaginyl-[protein] + UDP-N-acetyl-alpha-D-glucosamine = an N(4)-{beta-D-GlcNAc-(1-&gt;2)-[beta-D-GlcNAc-(1-&gt;4)]-alpha-D-Man-(1-&gt;3)-[alpha-D-Man-(1-&gt;6)]-beta-D-Man-(1-&gt;4)-beta-D-GlcNAc-(1-&gt;4)-beta-D-GlcNAc}-L-asparaginyl-[protein] + UDP + H(+). The enzyme catalyses an N(4)-{beta-D-GlcNAc-(1-&gt;2)-alpha-D-Man-(1-&gt;3)-[beta-D-GlcNAc-(1-&gt;2)-[beta-D-GlcNAc-(1-&gt;6)]-alpha-D-Man-(1-&gt;6)]-beta-D-Man-(1-&gt;4)-beta-D-GlcNAc-(1-&gt;4)-beta-D-GlcNAc}-L-asparaginyl-[protein] + UDP-N-acetyl-alpha-D-glucosamine = an N(4)-{beta-D-GlcNAc-(1-&gt;2)-[beta-D-GlcNAc-(1-&gt;4)]-alpha-D-Man-(1-&gt;3)-[beta-D-GlcNAc-(1-&gt;2)-[beta-D-GlcNAc-(1-&gt;6)]-alpha-D-Man-(1-&gt;6)]-beta-D-Man-(1-&gt;4)-beta-D-GlcNAc-(1-&gt;4)-beta-D-GlcNAc}-L-asparaginyl-[protein] + UDP + H(+). The catalysed reaction is an N(4)-{beta-D-GlcNAc-(1-&gt;2)-alpha-D-Man-(1-&gt;3)-[beta-D-GlcNAc-(1-&gt;2)-alpha-D-Man-(1-&gt;6)]-beta-D-Man-(1-&gt;4)-beta-D-GlcNAc-(1-&gt;4)-[alpha-L-Fuc-(1-&gt;6)]-beta-D-GlcNAc}-L-asparaginyl-[protein] + UDP-N-acetyl-alpha-D-glucosamine = N(4)-{beta-D-GlcNAc-(1-&gt;2)-[beta-D-GlcNAc-(1-&gt;4)]-alpha-D-Man-(1-&gt;3)-[beta-D-GlcNAc-(1-&gt;2)-alpha-D-Man-(1-&gt;6)]-beta-D-Man-(1-&gt;4)-beta-D-GlcNAc-(1-&gt;4)-[alpha-L-Fuc-(1-&gt;6)]-beta-D-GlcNAc}-asparaginyl-[protein] + UDP + H(+). It catalyses the reaction an N(4)-{beta-D-GlcNAc-(1-&gt;2)-alpha-D-Man-(1-&gt;3)-[beta-D-Gal-(1-&gt;4)-beta-D-GlcNAc-(1-&gt;2)-alpha-D-Man-(1-&gt;6)]-beta-D-Man-(1-&gt;4)-beta-D-GlcNAc-(1-&gt;4)-beta-D-GlcNAc}-L-asparaginyl-[protein] + UDP-N-acetyl-alpha-D-glucosamine = an N(4)-{beta-D-GlcNAc-(1-&gt;2)-[beta-D-GlcNAc-(1-&gt;4)]-alpha-D-Man-(1-&gt;3)-[beta-D-Gal-(1-&gt;4)-beta-D-GlcNAc-(1-&gt;2)-alpha-D-Man-(1-&gt;6)]-beta-D-Man-(1-&gt;4)-beta-D-GlcNAc-(1-&gt;4)-beta-D-GlcNAc}-L-asparaginyl-[protein] + UDP + H(+). It carries out the reaction N(4)-{beta-D-GlcNAc-(1-&gt;2)-alpha-D-Man-(1-&gt;3)-[alpha-D-Man-(1-&gt;3)-{alpha-D-Man-(1-&gt;6)}-alpha-D-Man-(1-&gt;6)]-beta-D-Man-(1-&gt;4)-beta-D-GlcNAc-(1-&gt;4)-beta-D-GlcNAc}-asparaginyl-[protein] + UDP-N-acetyl-alpha-D-glucosamine = N(4)-{beta-D-GlcNAc-(1-&gt;2)-[beta-D-GlcNAc-(1-&gt;4)]-alpha-D-Man-(1-&gt;3)-[alpha-D-Man-(1-&gt;3)-{alpha-D-Man-(1-&gt;6)}-alpha-D-Man-(1-&gt;6)]-beta-D-Man-(1-&gt;4)-beta-D-GlcNAc-(1-&gt;4)-beta-D-GlcNAc}-asparaginyl-[protein] + UDP + H(+). The enzyme catalyses N(4)-{beta-D-GlcNAc-(1-&gt;2)-alpha-D-Man-(1-&gt;3)-beta-D-Man-(1-&gt;4)-beta-D-GlcNAc-(1-&gt;4)-beta-D-GlcNAc}-asparaginyl-[protein] + UDP-N-acetyl-alpha-D-glucosamine = N(4)-{beta-D-GlcNAc-(1-&gt;2)-[beta-D-GlcNAc-(1-&gt;4)]-alpha-D-Man-(1-&gt;3)-beta-D-Man-(1-&gt;4)-beta-D-GlcNAc-(1-&gt;4)-beta-D-GlcNAc}-asparaginyl-[protein] + UDP + H(+). It functions in the pathway protein modification; protein glycosylation. With respect to regulation, inhibited by UDP. In terms of biological role, glycosyltransferase that catalyze the transfer of GlcNAc from UDP-GlcNAc to the GlcNAcbeta1-2Manalpha1-3 arm of the core structure of N-linked glycans through a beta1-4 linkage and participates in the production of tri- and tetra-antennary N-linked sugar chains. Involved in glucose transport by mediating SLC2A2/GLUT2 glycosylation, thereby controlling cell-surface expression of SLC2A2 in pancreatic beta cells. The polypeptide is Alpha-1,3-mannosyl-glycoprotein 4-beta-N-acetylglucosaminyltransferase A (Mus musculus (Mouse)).